The primary structure comprises 564 residues: Proline--tRNA ligase (564 aa).

It belongs to the class-II aminoacyl-tRNA synthetase family. ProS type 1 subfamily. Homodimer.

The protein resides in the cytoplasm. The enzyme catalyses tRNA(Pro) + L-proline + ATP = L-prolyl-tRNA(Pro) + AMP + diphosphate. Its function is as follows. Catalyzes the attachment of proline to tRNA(Pro) in a two-step reaction: proline is first activated by ATP to form Pro-AMP and then transferred to the acceptor end of tRNA(Pro). As ProRS can inadvertently accommodate and process non-cognate amino acids such as alanine and cysteine, to avoid such errors it has two additional distinct editing activities against alanine. One activity is designated as 'pretransfer' editing and involves the tRNA(Pro)-independent hydrolysis of activated Ala-AMP. The other activity is designated 'posttransfer' editing and involves deacylation of mischarged Ala-tRNA(Pro). The misacylated Cys-tRNA(Pro) is not edited by ProRS. The chain is Proline--tRNA ligase from Sulfurihydrogenibium sp. (strain YO3AOP1).